The sequence spans 419 residues: UDP-N-acetylglucosamine 1-carboxyvinyltransferase (419 aa).

22–23 provides a ligand contact to phosphoenolpyruvate; that stretch reads KN. Arg95 contacts UDP-N-acetyl-alpha-D-glucosamine. Cys119 serves as the catalytic Proton donor. Cys119 bears the 2-(S-cysteinyl)pyruvic acid O-phosphothioketal mark. Residues 164-167, Asp308, and Ile330 contribute to the UDP-N-acetyl-alpha-D-glucosamine site; that span reads KVSV.

This sequence belongs to the EPSP synthase family. MurA subfamily.

Its subcellular location is the cytoplasm. It carries out the reaction phosphoenolpyruvate + UDP-N-acetyl-alpha-D-glucosamine = UDP-N-acetyl-3-O-(1-carboxyvinyl)-alpha-D-glucosamine + phosphate. It functions in the pathway cell wall biogenesis; peptidoglycan biosynthesis. Cell wall formation. Adds enolpyruvyl to UDP-N-acetylglucosamine. The chain is UDP-N-acetylglucosamine 1-carboxyvinyltransferase from Rickettsia canadensis (strain McKiel).